A 334-amino-acid polypeptide reads, in one-letter code: Cytochrome c biogenesis protein CcsA (334 aa).

The next 8 helical transmembrane spans lie at 12 to 32 (NTAFLVLLLTMFAYWVAVVFP), 35 to 55 (WLVQGASGAMAIANLTITALL), 67 to 87 (ISNLYESLFFLAWGITAVHFI), 96 to 116 (FVGAVTSPIALGIVAFAALTL), 141 to 161 (VMMVSYATLMVGSLLAIAFLF), 242 to 262 (IIGLGFPLLTIGIIAGAVWAN), 277 to 297 (WALITWLVFAAYLHARITKGW), and 303 to 323 (AILAASGFTVVWICYLGVNLL).

This sequence belongs to the CcmF/CycK/Ccl1/NrfE/CcsA family. In terms of assembly, may interact with ccs1.

It localises to the cellular thylakoid membrane. Functionally, required during biogenesis of c-type cytochromes (cytochrome c6 and cytochrome f) at the step of heme attachment. The chain is Cytochrome c biogenesis protein CcsA from Synechocystis sp. (strain ATCC 27184 / PCC 6803 / Kazusa).